The following is a 354-amino-acid chain: Rhodopsin (354 aa).

The Extracellular portion of the chain corresponds to 1–36 (MNGTEGPYFYIPMVNTTGIVRSPYDYPQYYLVNPAA). Residues Asn2 and Asn15 are each glycosylated (N-linked (GlcNAc...) asparagine). A helical transmembrane segment spans residues 37 to 61 (YAALGAYMFFLILVGFPINFLTLYV). Residues 62-73 (TIEHKKLRTPLN) lie on the Cytoplasmic side of the membrane. A helical membrane pass occupies residues 74 to 96 (YILLNLAVANLFMVFGGFTTTMY). Over 97–110 (TSMHGYFVLGRLGC) the chain is Extracellular. A disulfide bridge connects residues Cys110 and Cys187. A helical transmembrane segment spans residues 111 to 133 (NLEGFFATLGGEIALWSLVVLAV). A 'Ionic lock' involved in activated form stabilization motif is present at residues 134–136 (ERW). The Cytoplasmic portion of the chain corresponds to 134–152 (ERWMVVCKPISNFRFGENH). A helical transmembrane segment spans residues 153–173 (AIMGLAMTWLMASACAVPPLV). The Extracellular portion of the chain corresponds to 174-202 (GWSRYIPEGMQCSCGVDYYTRAEGFNNES). N-linked (GlcNAc...) asparagine glycosylation occurs at Asn200. A helical transmembrane segment spans residues 203-224 (FVVYMFCCHFMIPLIIVFFCYG). The Cytoplasmic portion of the chain corresponds to 225-252 (RLLCAVKEAAAAQQESETTQRAEREVTR). Residues 253–274 (MVVIMVIAFLVCWLPYASVAWW) traverse the membrane as a helical segment. Residues 275–286 (IFTHQGSEFGPV) lie on the Extracellular side of the membrane. The helical transmembrane segment at 287–308 (FMTIPAFFAKSSSIYNPMIYIC) threads the bilayer. Lys296 is subject to N6-(retinylidene)lysine. The Cytoplasmic portion of the chain corresponds to 309 to 354 (MNKQFRNCMITTLCCGKNPFEEEEGASSTASKTEASSVSSSSVSPA). 2 S-palmitoyl cysteine lipidation sites follow: Cys322 and Cys323. Residues 329-354 (EEEEGASSTASKTEASSVSSSSVSPA) are disordered. Residues 334 to 354 (ASSTASKTEASSVSSSSVSPA) are compositionally biased toward low complexity.

It belongs to the G-protein coupled receptor 1 family. Opsin subfamily. In terms of processing, phosphorylated on some or all of the serine and threonine residues present in the C-terminal region. Post-translationally, contains one covalently linked retinal chromophore.

It is found in the membrane. Its subcellular location is the cell projection. It localises to the cilium. The protein localises to the photoreceptor outer segment. Functionally, photoreceptor required for image-forming vision at low light intensity. While most salt water fish species use retinal as chromophore, most freshwater fish use 3-dehydroretinal, or a mixture of retinal and 3-dehydroretinal. Light-induced isomerization of 11-cis to all-trans retinal triggers a conformational change that activates signaling via G-proteins. Subsequent receptor phosphorylation mediates displacement of the bound G-protein alpha subunit by arrestin and terminates signaling. This chain is Rhodopsin (rho), found in Mullus surmuletus (Striped red mullet).